The primary structure comprises 517 residues: MTASEERLAALTSWHADWSGLRVVVYGLGVTGFSVADTLAELGASVLVVASRADHERAMLLDVIGAELLLQADLSAPPERLTAFGPELIVVSPGFHADHPLLLWADQQGIPVWGDIELAWRLRDKTAPPGSGNSPADWICVTGTNGKTTTVQLTATMLLAGGSRVAPCGNIGVAVLDAIRDPQGFDVLVVELSSYQLHWINRNAGGEVSPYAAACLNIADDHLDWHGSLEAYAAAKAKVYENAQVACVYNRADEATLRMVEETEVVEGARAIGFGLDVPGPSDFGIVDGILCDRAFLDDRLHSAIELTTLEELREAGLAAPHIVANILAASALARAYGVEPWVVRDVLSAFRLDAHRIELVRIEAGVSWVDDSKATNPHAADASLRAYPSVVWVVGGLFKGVDLDGLVKRHAARLRGAVLIGADRDLLRSAFQRHAPGLPVVEVDADETEHVMPTAVRLAAALVRDGDTVLLAPAAASMDQFSDYAERGRLFQAAVNEYLGGGADDGSSASRPGSGG.

143–149 (GTNGKTT) serves as a coordination point for ATP.

The protein belongs to the MurCDEF family.

Its subcellular location is the cytoplasm. It carries out the reaction UDP-N-acetyl-alpha-D-muramoyl-L-alanine + D-glutamate + ATP = UDP-N-acetyl-alpha-D-muramoyl-L-alanyl-D-glutamate + ADP + phosphate + H(+). Its pathway is cell wall biogenesis; peptidoglycan biosynthesis. Functionally, cell wall formation. Catalyzes the addition of glutamate to the nucleotide precursor UDP-N-acetylmuramoyl-L-alanine (UMA). This Leifsonia xyli subsp. xyli (strain CTCB07) protein is UDP-N-acetylmuramoylalanine--D-glutamate ligase.